The sequence spans 667 residues: Putative L-type lectin-domain containing receptor kinase I.4 (667 aa).

A signal peptide spans Met-1–Gly-21. Residues Gln-22 to Pro-294 lie on the Extracellular side of the membrane. The interval Glu-24–Ser-257 is legume-lectin like. 7 N-linked (GlcNAc...) asparagine glycosylation sites follow: Asn-55, Asn-110, Asn-124, Asn-128, Asn-181, Asn-204, and Asn-225. The chain crosses the membrane as a helical span at residues Leu-295–Tyr-315. Residues Trp-316 to Arg-667 are Cytoplasmic-facing. Residues Phe-350–Pro-625 enclose the Protein kinase domain. ATP is bound by residues Val-356–Val-364 and Lys-378. The active-site Proton acceptor is the Asp-474.

In the C-terminal section; belongs to the protein kinase superfamily. Ser/Thr protein kinase family. This sequence in the N-terminal section; belongs to the leguminous lectin family.

It localises to the cell membrane. The catalysed reaction is L-seryl-[protein] + ATP = O-phospho-L-seryl-[protein] + ADP + H(+). It catalyses the reaction L-threonyl-[protein] + ATP = O-phospho-L-threonyl-[protein] + ADP + H(+). The polypeptide is Putative L-type lectin-domain containing receptor kinase I.4 (LECRK14) (Arabidopsis thaliana (Mouse-ear cress)).